The sequence spans 117 residues: Large ribosomal subunit protein bL20 (117 aa).

It belongs to the bacterial ribosomal protein bL20 family.

Its function is as follows. Binds directly to 23S ribosomal RNA and is necessary for the in vitro assembly process of the 50S ribosomal subunit. It is not involved in the protein synthesizing functions of that subunit. The chain is Large ribosomal subunit protein bL20 from Oleidesulfovibrio alaskensis (strain ATCC BAA-1058 / DSM 17464 / G20) (Desulfovibrio alaskensis).